A 142-amino-acid chain; its full sequence is Transcription antitermination protein NusB (142 aa).

It belongs to the NusB family.

Functionally, involved in transcription antitermination. Required for transcription of ribosomal RNA (rRNA) genes. Binds specifically to the boxA antiterminator sequence of the ribosomal RNA (rrn) operons. The sequence is that of Transcription antitermination protein NusB from Actinobacillus succinogenes (strain ATCC 55618 / DSM 22257 / CCUG 43843 / 130Z).